The primary structure comprises 351 residues: Glycerol-3-phosphate dehydrogenase [NAD(P)+] (351 aa).

Positions 12, 13, 33, and 114 each coordinate NADPH. Sn-glycerol 3-phosphate contacts are provided by K114, G145, and S147. A149 contributes to the NADPH binding site. Sn-glycerol 3-phosphate-binding residues include K200, D253, S263, R264, and N265. The active-site Proton acceptor is the K200. An NADPH-binding site is contributed by R264. 2 residues coordinate NADPH: V288 and E290.

Belongs to the NAD-dependent glycerol-3-phosphate dehydrogenase family.

It localises to the cytoplasm. It carries out the reaction sn-glycerol 3-phosphate + NAD(+) = dihydroxyacetone phosphate + NADH + H(+). The catalysed reaction is sn-glycerol 3-phosphate + NADP(+) = dihydroxyacetone phosphate + NADPH + H(+). Its pathway is membrane lipid metabolism; glycerophospholipid metabolism. In terms of biological role, catalyzes the reduction of the glycolytic intermediate dihydroxyacetone phosphate (DHAP) to sn-glycerol 3-phosphate (G3P), the key precursor for phospholipid synthesis. The protein is Glycerol-3-phosphate dehydrogenase [NAD(P)+] of Lacticaseibacillus paracasei (strain ATCC 334 / BCRC 17002 / CCUG 31169 / CIP 107868 / KCTC 3260 / NRRL B-441) (Lactobacillus paracasei).